A 309-amino-acid polypeptide reads, in one-letter code: Shugoshin (309 aa).

The stretch at N42–T77 forms a coiled coil. Disordered regions lie at residues F165–R195 and E210–F309. Residues N167–N178 are compositionally biased toward low complexity. Residues P184–G193 show a composition bias toward basic residues.

The protein belongs to the shugoshin family. Expressed in gonads.

The protein resides in the nucleus. It localises to the chromosome. Its subcellular location is the centromere. Functionally, component of cell cycle checkpoints, which ensures chromosome segregation during meiosis and mitosis. During meiotic prophase, it is involved in the regulation of the synapsis checkpoint, which monitors whether homologous chromosomes have synapsed, and the DNA damage response. Plays a central role in chromosome cohesion during cell division by preventing premature dissociation of cohesin complex after prophase, when most of cohesin complex dissociates from chromosomes arms. The protein is Shugoshin of Caenorhabditis elegans.